Here is a 207-residue protein sequence, read N- to C-terminus: 2,3-bisphosphoglycerate-dependent phosphoglycerate mutase (207 aa).

Substrate-binding positions include 10 to 17 (RHGQSEWN), 23 to 24 (TG), arginine 62, 89 to 92 (ERDY), lysine 100, 116 to 117 (RR), and 160 to 161 (GN). Catalysis depends on histidine 11, which acts as the Tele-phosphohistidine intermediate. Glutamate 89 serves as the catalytic Proton donor/acceptor.

Belongs to the phosphoglycerate mutase family. BPG-dependent PGAM subfamily. Homodimer.

It catalyses the reaction (2R)-2-phosphoglycerate = (2R)-3-phosphoglycerate. It participates in carbohydrate degradation; glycolysis; pyruvate from D-glyceraldehyde 3-phosphate: step 3/5. Catalyzes the interconversion of 2-phosphoglycerate and 3-phosphoglycerate. The sequence is that of 2,3-bisphosphoglycerate-dependent phosphoglycerate mutase from Nitrobacter hamburgensis (strain DSM 10229 / NCIMB 13809 / X14).